A 126-amino-acid polypeptide reads, in one-letter code: Protein ApaG (126 aa).

The ApaG domain occupies Asp-2–Asn-126.

The protein is Protein ApaG of Vibrio vulnificus (strain CMCP6).